The following is a 99-amino-acid chain: uncharacterized protein (99 aa).

The first 17 residues, 1–17 (MMMNSFFPAMALMVLVG), serve as a signal peptide directing secretion. Cys-18 is lipidated: N-palmitoyl cysteine. Cys-18 is lipidated: S-diacylglycerol cysteine.

Its subcellular location is the cell membrane. This is an uncharacterized protein from Escherichia coli O157:H7.